Here is a 276-residue protein sequence, read N- to C-terminus: NH(3)-dependent NAD(+) synthetase (276 aa).

Gly43 to Ser50 provides a ligand contact to ATP. Asp49 contributes to the Mg(2+) binding site. Arg146 is a deamido-NAD(+) binding site. Residue Thr166 participates in ATP binding. Glu171 contributes to the Mg(2+) binding site. Residues Lys179 and Asp186 each contribute to the deamido-NAD(+) site. Residues Lys195 and Thr217 each coordinate ATP. Deamido-NAD(+) is bound at residue His266 to Lys267.

Belongs to the NAD synthetase family. Homodimer.

It catalyses the reaction deamido-NAD(+) + NH4(+) + ATP = AMP + diphosphate + NAD(+) + H(+). Its pathway is cofactor biosynthesis; NAD(+) biosynthesis; NAD(+) from deamido-NAD(+) (ammonia route): step 1/1. Its function is as follows. Catalyzes the ATP-dependent amidation of deamido-NAD to form NAD. Uses ammonia as a nitrogen source. This is NH(3)-dependent NAD(+) synthetase from Shewanella amazonensis (strain ATCC BAA-1098 / SB2B).